Reading from the N-terminus, the 245-residue chain is 1-(5-phosphoribosyl)-5-[(5-phosphoribosylamino)methylideneamino] imidazole-4-carboxamide isomerase (245 aa).

Asp7 (proton acceptor) is an active-site residue. Asp129 functions as the Proton donor in the catalytic mechanism.

Belongs to the HisA/HisF family.

The protein resides in the cytoplasm. The catalysed reaction is 1-(5-phospho-beta-D-ribosyl)-5-[(5-phospho-beta-D-ribosylamino)methylideneamino]imidazole-4-carboxamide = 5-[(5-phospho-1-deoxy-D-ribulos-1-ylimino)methylamino]-1-(5-phospho-beta-D-ribosyl)imidazole-4-carboxamide. It functions in the pathway amino-acid biosynthesis; L-histidine biosynthesis; L-histidine from 5-phospho-alpha-D-ribose 1-diphosphate: step 4/9. This Shewanella amazonensis (strain ATCC BAA-1098 / SB2B) protein is 1-(5-phosphoribosyl)-5-[(5-phosphoribosylamino)methylideneamino] imidazole-4-carboxamide isomerase.